The following is a 400-amino-acid chain: UDP-glucuronate:glycolipid 2-beta-glucuronosyltransferase (400 aa).

Residue aspartate 157 is the Proton acceptor of the active site. UDP-alpha-D-glucuronate-binding positions include 230–231, 272–273, tyrosine 292, and 306–310; these read SM, EM, and MKLLQ. A disordered region spans residues 377-400; that stretch reads PETRLYPHPPTAAPQLSSEAALSH. Residues 390-400 are compositionally biased toward polar residues; the sequence is PQLSSEAALSH.

This sequence belongs to the glycosyltransferase 70 family.

It is found in the cell inner membrane. The catalysed reaction is alpha-D-Man-(1-&gt;3)-beta-D-Glc-(1-&gt;4)-alpha-D-Glc-1-di-trans,octa-cis-undecaprenyl diphosphate + UDP-alpha-D-glucuronate = beta-D-GlcA-(1-&gt;2)-alpha-D-Man-(1-&gt;3)-beta-D-Glc-(1-&gt;4)-alpha-D-Glc-di-trans,octa-cis-undecaprenyl diphosphate + UDP + H(+). It participates in glycan biosynthesis; xanthan biosynthesis. Catalyzes the transfer of a glucuronic acid (GlcA) residue from UDP-glucuronate to mannose-alpha-1,3-glucose-beta-1,4-glucose-P-P-polyisoprenyl to form the lipid-linked tetrasaccharide GlcA-Man-Glc(2)-PP-Pol, with a glucuronic acid-beta-mannose linkage. Is involved in the biosynthesis of the exopolysaccharide xanthan, since it catalyzes the fourth glycosylation step in the assembly of the pentasaccharide-P-P-polyisoprenyl repeating unit of xanthan. Is unable to use the trisaccharide acceptor freed from the pyrophosphate lipid moiety. Does not show specificity for the lipidic portion of the acceptor. Shows diminished activity when tested with 6-O-acetyl-mannose-alpha-1,3-glucose-beta-1,4-glucose-P-P-polyisoprenyl, a putative intermediate in the synthesis of xanthan; this could indicate that acetylation of the internal mannose takes place after the formation of the GumK product. In Xanthomonas campestris pv. campestris, this protein is UDP-glucuronate:glycolipid 2-beta-glucuronosyltransferase (gumK).